The primary structure comprises 177 residues: Large ribosomal subunit protein bL9 (177 aa).

The interval 151–177 (EDEEIAEAAPVAEAQAEADGHSTEETA) is disordered. Over residues 157-167 (EAAPVAEAQAE) the composition is skewed to low complexity. A compositionally biased stretch (basic and acidic residues) spans 168 to 177 (ADGHSTEETA).

It belongs to the bacterial ribosomal protein bL9 family.

In terms of biological role, binds to the 23S rRNA. The chain is Large ribosomal subunit protein bL9 from Solidesulfovibrio magneticus (strain ATCC 700980 / DSM 13731 / RS-1) (Desulfovibrio magneticus).